The primary structure comprises 124 residues: MANKSAEHSHFPWKHIVGFILSIVLTLLALWVAVYTDLSSSAKLWIIFGFAFIQAALQLLMFMHMTESENGTIQVGNTLFGFFGAIVIVLGSIWIFAAHYHHGDHMDGNPPGGAEHSEHSGHNE.

3 helical membrane passes run 16–36 (IVGF…AVYT), 44–64 (LWII…MFMH), and 78–98 (TLFG…IFAA).

It belongs to the cytochrome c oxidase bacterial subunit 4 family.

It localises to the cell membrane. The enzyme catalyses 2 a quinol + O2 = 2 a quinone + 2 H2O. Catalyzes quinol oxidation with the concomitant reduction of oxygen to water. Major component for energy conversion during vegetative growth. In Bacillus subtilis (strain 168), this protein is Quinol oxidase subunit 4 (qoxD).